A 648-amino-acid polypeptide reads, in one-letter code: Serine/threonine-protein kinase PrkC (648 aa).

Residues 1–330 (MLIGKRISGR…KKNGKRKKWP (330 aa)) are Cytoplasmic-facing. A Protein kinase domain is found at 11 to 271 (YQILRVIGGG…DMEADIKTAF (261 aa)). ATP is bound by residues 17–25 (IGGGGMANV) and lysine 40. Residue aspartate 134 is the Proton acceptor of the active site. Threonine 162, threonine 163, threonine 165, and threonine 167 each carry phosphothreonine; by autocatalysis. Residue serine 214 is modified to Phosphoserine; by autocatalysis. Phosphothreonine; by autocatalysis occurs at positions 290, 313, and 320. A helical membrane pass occupies residues 331 to 351 (WVLLTICLVFITAGILAVTVF). Residues 352-648 (PSLFMPKDVK…YKTIEYPKDE (297 aa)) are Extracellular-facing. PASTA domains follow at residues 356 to 424 (MPKD…YKST), 425 to 492 (GKAK…TVSI), and 493 to 559 (GPED…TFSL).

It belongs to the protein kinase superfamily. Ser/Thr protein kinase family. Homodimer. Autophosphorylation on threonine residue(s) and serine residue considerably increases the kinase activity of the protein. Dephosphorylated in vitro by PrpC.

The protein localises to the spore membrane. The catalysed reaction is L-seryl-[protein] + ATP = O-phospho-L-seryl-[protein] + ADP + H(+). It carries out the reaction L-threonyl-[protein] + ATP = O-phospho-L-threonyl-[protein] + ADP + H(+). Bryostatin activates PrkC activity and induces germination, whereas staurosporine inhibits PrkC and significantly reduced peptidoglycan-dependent germination. Kinase activity of isolated N-terminus stimulated by poly-L-lysine or myelin basic protein. Its function is as follows. Protein kinase that is responsible for triggering spore germination in response to muropeptides, signaling bacteria to exit dormancy. PrkC is thus a germination receptor that binds peptidoglycan fragments containing m-Dpm (meso-diaminopimelate), which act as spore germinants. Autophosphorylates and phosphorylates EF-G (elongation factor G, fusA); the latter modification is likely necessary for germination in response to peptidoglycan. Another group did not detect phosphorylation of EF-G. PrkC is a substrate in vitro of the cotranscribed phosphatase PrpC, which suggests that they form a functional couple in vivo. Might also be involved in sporulation and biofilm formation. Does not seem to be involved in stress response. The polypeptide is Serine/threonine-protein kinase PrkC (prkC) (Bacillus subtilis (strain 168)).